Here is a 122-residue protein sequence, read N- to C-terminus: UPF0102 protein RHECIAT_CH0000358 (122 aa).

The protein belongs to the UPF0102 family.

This is UPF0102 protein RHECIAT_CH0000358 from Rhizobium etli (strain CIAT 652).